The sequence spans 246 residues: Envelope glycoprotein L (246 aa).

Positions 1-19 (MKTNIFFIFLISILNQIYA) are cleaved as a signal peptide. Residues 29-235 (LEQECIKNIL…EKYNEVLPFR (207 aa)) enclose the gL betaherpesvirus-type domain. A disulfide bond links Cys134 and Cys139.

Belongs to the herpesviridae glycoprotein L (gL) family. Betaherpesvirinae gL subfamily. In terms of assembly, interacts with glycoprotein H (gH); this interaction is necessary for the correct processing and cell surface expression of gH.

The protein resides in the virion membrane. It localises to the host cell membrane. The protein localises to the host Golgi apparatus. Its subcellular location is the host trans-Golgi network. The heterodimer glycoprotein H-glycoprotein L is required for the fusion of viral and plasma membranes leading to virus entry into the host cell. Acts as a functional inhibitor of gH and maintains gH in an inhibited form. Upon binding to host integrins, gL dissociates from gH leading to activation of the viral fusion glycoproteins gB and gH. The protein is Envelope glycoprotein L of Homo sapiens (Human).